Here is a 58-residue protein sequence, read N- to C-terminus: KappaPI-actitoxin-Avd3c (58 aa).

Residues 5 to 55 enclose the BPTI/Kunitz inhibitor domain; that stretch reads CLLPMDVGRCRARHPRYYYNSSSRRCEKFIYGGCRGNANNFITKKECEKVC. Intrachain disulfides connect Cys5–Cys55, Cys14–Cys38, and Cys30–Cys51.

The protein belongs to the venom Kunitz-type family. Sea anemone type 2 potassium channel toxin subfamily.

The protein resides in the secreted. The protein localises to the nematocyst. Dual-function toxin that inhibits both the serine protease trypsin (Kd&lt;30 nM) and voltage-gated potassium channels Kv1.2/KCNA2 (IC(50)=1100 nM). The chain is KappaPI-actitoxin-Avd3c from Anemonia sulcata (Mediterranean snakelocks sea anemone).